The following is a 448-amino-acid chain: Chromosomal replication initiator protein DnaA (448 aa).

The tract at residues 1 to 73 (MNTHLTETWE…VNALKLLTSK (73 aa)) is domain I, interacts with DnaA modulators. A domain II region spans residues 73–109 (KKYNIDFIVTTEEKIEENQKNHNNEKSNIVVNDEMST). Residues 110–326 (MLNPKYTFDS…GALIRIVAFS (217 aa)) form a domain III, AAA+ region region. Glycine 154, glycine 156, lysine 157, and threonine 158 together coordinate ATP. A domain IV, binds dsDNA region spans residues 327-448 (SLTNKEISID…KELNKRINQK (122 aa)).

The protein belongs to the DnaA family. As to quaternary structure, oligomerizes as a right-handed, spiral filament on DNA at oriC.

The protein resides in the cytoplasm. Plays an essential role in the initiation and regulation of chromosomal replication. ATP-DnaA binds to the origin of replication (oriC) to initiate formation of the DNA replication initiation complex once per cell cycle. Binds the DnaA box (a 9 base pair repeat at the origin) and separates the double-stranded (ds)DNA. Forms a right-handed helical filament on oriC DNA; dsDNA binds to the exterior of the filament while single-stranded (ss)DNA is stabiized in the filament's interior. The ATP-DnaA-oriC complex binds and stabilizes one strand of the AT-rich DNA unwinding element (DUE), permitting loading of DNA polymerase. After initiation quickly degrades to an ADP-DnaA complex that is not apt for DNA replication. Binds acidic phospholipids. In Clostridium botulinum (strain ATCC 19397 / Type A), this protein is Chromosomal replication initiator protein DnaA.